The sequence spans 312 residues: 4-hydroxy-3-methylbut-2-enyl diphosphate reductase (312 aa).

Position 15 (cysteine 15) interacts with [4Fe-4S] cluster. (2E)-4-hydroxy-3-methylbut-2-enyl diphosphate-binding residues include histidine 44 and histidine 77. Residues histidine 44 and histidine 77 each contribute to the dimethylallyl diphosphate site. 2 residues coordinate isopentenyl diphosphate: histidine 44 and histidine 77. Cysteine 99 serves as a coordination point for [4Fe-4S] cluster. Residue histidine 127 participates in (2E)-4-hydroxy-3-methylbut-2-enyl diphosphate binding. Histidine 127 is a binding site for dimethylallyl diphosphate. Position 127 (histidine 127) interacts with isopentenyl diphosphate. Residue glutamate 129 is the Proton donor of the active site. Threonine 167 contacts (2E)-4-hydroxy-3-methylbut-2-enyl diphosphate. Cysteine 197 is a [4Fe-4S] cluster binding site. Serine 225, serine 226, asparagine 227, and serine 269 together coordinate (2E)-4-hydroxy-3-methylbut-2-enyl diphosphate. Serine 225, serine 226, asparagine 227, and serine 269 together coordinate dimethylallyl diphosphate. Isopentenyl diphosphate is bound by residues serine 225, serine 226, asparagine 227, and serine 269.

It belongs to the IspH family. The cofactor is [4Fe-4S] cluster.

The catalysed reaction is isopentenyl diphosphate + 2 oxidized [2Fe-2S]-[ferredoxin] + H2O = (2E)-4-hydroxy-3-methylbut-2-enyl diphosphate + 2 reduced [2Fe-2S]-[ferredoxin] + 2 H(+). The enzyme catalyses dimethylallyl diphosphate + 2 oxidized [2Fe-2S]-[ferredoxin] + H2O = (2E)-4-hydroxy-3-methylbut-2-enyl diphosphate + 2 reduced [2Fe-2S]-[ferredoxin] + 2 H(+). The protein operates within isoprenoid biosynthesis; dimethylallyl diphosphate biosynthesis; dimethylallyl diphosphate from (2E)-4-hydroxy-3-methylbutenyl diphosphate: step 1/1. Its pathway is isoprenoid biosynthesis; isopentenyl diphosphate biosynthesis via DXP pathway; isopentenyl diphosphate from 1-deoxy-D-xylulose 5-phosphate: step 6/6. Catalyzes the conversion of 1-hydroxy-2-methyl-2-(E)-butenyl 4-diphosphate (HMBPP) into a mixture of isopentenyl diphosphate (IPP) and dimethylallyl diphosphate (DMAPP). Acts in the terminal step of the DOXP/MEP pathway for isoprenoid precursor biosynthesis. The protein is 4-hydroxy-3-methylbut-2-enyl diphosphate reductase of Azoarcus sp. (strain BH72).